We begin with the raw amino-acid sequence, 220 residues long: UPF0319 protein YccT (220 aa).

Positions 1–20 (MKTGIVTTLIALCLPVSVFA) are cleaved as a signal peptide.

Belongs to the UPF0319 family.

The chain is UPF0319 protein YccT from Escherichia coli (strain 55989 / EAEC).